The sequence spans 610 residues: UvrABC system protein C (610 aa).

Residues 16–94 form the GIY-YIG domain; it reads NQPGVYRMYN…IKQYLPKYNV (79 aa). The region spanning 204 to 239 is the UVR domain; it reads NQVLSILVEKMEQASRELRFEDAAKARDQIQAIRRV.

This sequence belongs to the UvrC family. As to quaternary structure, interacts with UvrB in an incision complex.

It is found in the cytoplasm. The UvrABC repair system catalyzes the recognition and processing of DNA lesions. UvrC both incises the 5' and 3' sides of the lesion. The N-terminal half is responsible for the 3' incision and the C-terminal half is responsible for the 5' incision. The sequence is that of UvrABC system protein C from Vibrio cholerae serotype O1 (strain ATCC 39315 / El Tor Inaba N16961).